A 360-amino-acid polypeptide reads, in one-letter code: Protein phosphatase 1 regulatory subunit 7 (360 aa).

The interval Met-1 to Leu-65 is disordered. Residue Ala-2 is modified to N-acetylalanine. 5 positions are modified to phosphoserine: Ser-12, Ser-24, Ser-27, Ser-44, and Ser-47. Residues Glu-17–Lys-34 show a composition bias toward basic and acidic residues. The segment covering Glu-53–Gln-63 has biased composition (acidic residues). LRR repeat units lie at residues Asp-77–Lys-98, Lys-99–Gln-120, Ser-121–Thr-142, Glu-143–Thr-164, Arg-165–His-186, Gln-187–Thr-208, Asn-209–Thr-230, Asn-231–Val-252, Asn-253–Asn-274, Lys-275–Thr-296, and Glu-297–Lys-318. A Phosphoserine modification is found at Ser-322. The 30-residue stretch at Asn-331 to Phe-360 folds into the LRRCT domain.

It belongs to the SDS22 family. In terms of assembly, interacts with PPP1CA, PPP1CB and PPP1CC/PPP1G. Interacts with PPP1CC isoform 2 in motile caudal epididymal spermatozoa. In terms of tissue distribution, expressed in epididymal spermatozoa including the principal piece of the flagellum and the head-neck junction.

Its subcellular location is the nucleus. Regulatory subunit of protein phosphatase 1. Inactivates the PPP1CC isoform 2 during epididymal sperm maturation. In Bos taurus (Bovine), this protein is Protein phosphatase 1 regulatory subunit 7 (PPP1R7).